The chain runs to 166 residues: NAD(P)H-quinone oxidoreductase subunit I, chloroplastic (166 aa).

4Fe-4S ferredoxin-type domains follow at residues 55–84 (GRIHFEFDKCIACEVCVRVCPIDLPVVDWK) and 95–124 (LNYSIDFGICIFCGNCVEYCPTNCLSMTEE). 8 residues coordinate [4Fe-4S] cluster: Cys64, Cys67, Cys70, Cys74, Cys104, Cys107, Cys110, and Cys114.

The protein belongs to the complex I 23 kDa subunit family. In terms of assembly, NDH is composed of at least 16 different subunits, 5 of which are encoded in the nucleus. [4Fe-4S] cluster serves as cofactor.

It is found in the plastid. The protein resides in the chloroplast thylakoid membrane. It carries out the reaction a plastoquinone + NADH + (n+1) H(+)(in) = a plastoquinol + NAD(+) + n H(+)(out). The enzyme catalyses a plastoquinone + NADPH + (n+1) H(+)(in) = a plastoquinol + NADP(+) + n H(+)(out). In terms of biological role, NDH shuttles electrons from NAD(P)H:plastoquinone, via FMN and iron-sulfur (Fe-S) centers, to quinones in the photosynthetic chain and possibly in a chloroplast respiratory chain. The immediate electron acceptor for the enzyme in this species is believed to be plastoquinone. Couples the redox reaction to proton translocation, and thus conserves the redox energy in a proton gradient. This chain is NAD(P)H-quinone oxidoreductase subunit I, chloroplastic, found in Stevia rebaudiana (Stevia).